We begin with the raw amino-acid sequence, 1142 residues long: Enamelin (1142 aa).

The first 39 residues, 1-39, serve as a signal peptide directing secretion; the sequence is MLVLRCRLGTSFPKLDNLVPKGKMKILLVFLGLLGNSVA. 6 disordered regions span residues 88–193, 214–326, 398–671, 874–955, 1020–1048, and 1062–1092; these read QYQM…ISNE, YYSE…PNIR, PANL…QNRW, CCAG…LRRN, VIGTPDEGSNPEGIQSQVQENESERQQQR, and LAKHHSSTTGTPSSDGRQSPFDGDSITPTEN. Residues 103-114 show a composition bias toward basic residues; the sequence is HPRKSSAPKRHN. N-linked (GlcNAc...) asparagine glycans are attached at residues N114 and N126. Residues 117–128 are compositionally biased toward polar residues; it reads DQTQETQKPNQT. Residues 140-162 show a composition bias toward low complexity; sequence KQPSHNQPQPEEEAQPPQAFPPF. A compositionally biased stretch (pro residues) spans 170–186; that stretch reads QQPPWQIPQRLPPPGYG. Phosphoserine is present on residues S191 and S216. The span at 223–234 shows a compositional bias: basic and acidic residues; that stretch reads DFEKPKEEDPPK. The segment covering 240–285 has biased composition (polar residues); sequence TEPTANSTVTETNSTQPNPKGSQGGNDTSPTGNSTPGLNTGNNPPA. 4 N-linked (GlcNAc...) asparagine glycosylation sites follow: N245, N252, N265, and N296. Over residues 429 to 442 the composition is skewed to basic and acidic residues; it reads RNEKIQNPKEKPLG. 3 stretches are compositionally biased toward polar residues: residues 452–470, 507–516, and 531–544; these read KNPTSPWRNSQQYEVNKSN, SDGQTQSQNL, and SETNQSELKHSSYQ. N467 is a glycosylation site (N-linked (GlcNAc...) asparagine). N534 carries N-linked (GlcNAc...) asparagine glycosylation. Positions 556 to 588 are enriched in basic and acidic residues; sequence AKEHFPAGRNTWDHQEISPPFKEDPGRQEEHLP. A compositionally biased stretch (acidic residues) spans 652–661; it reads NEEDPVDPTG. Positions 924–934 are enriched in polar residues; the sequence is SPTSILPGQRN. N-linked (GlcNAc...) asparagine glycosylation is present at N934. The span at 935–951 shows a compositional bias: basic and acidic residues; that stretch reads SSEKRESQNPFRDDVST. N1040 is a glycosylation site (N-linked (GlcNAc...) asparagine). Over residues 1068–1078 the composition is skewed to polar residues; the sequence is STTGTPSSDGR.

Post-translationally, phosphorylated by FAM20C in vitro. Expressed in tooth particularly in odontoblast, ameloblast and cementoblast.

It is found in the secreted. The protein resides in the extracellular space. Its subcellular location is the extracellular matrix. Involved in the mineralization and structural organization of enamel. Involved in the extension of enamel during the secretory stage of dental enamel formation. This is Enamelin (ENAM) from Homo sapiens (Human).